A 237-amino-acid chain; its full sequence is Ribose-5-phosphate isomerase A (237 aa).

Residues 29-32 (SGST), 86-89 (DGAD), and 99-102 (KGGG) each bind substrate. Glu-108 acts as the Proton acceptor in catalysis. A substrate-binding site is contributed by Lys-126.

Belongs to the ribose 5-phosphate isomerase family. In terms of assembly, homodimer.

It catalyses the reaction aldehydo-D-ribose 5-phosphate = D-ribulose 5-phosphate. It functions in the pathway carbohydrate degradation; pentose phosphate pathway; D-ribose 5-phosphate from D-ribulose 5-phosphate (non-oxidative stage): step 1/1. Functionally, catalyzes the reversible conversion of ribose-5-phosphate to ribulose 5-phosphate. In Prochlorococcus marinus (strain MIT 9312), this protein is Ribose-5-phosphate isomerase A.